The sequence spans 31 residues: NNSKAKCGDLAGWSKLTFKSADECTKTGQKS.

Its subcellular location is the secreted. The protein resides in the nematocyst. It is found in the target cell membrane. Functionally, cytolysin that shows weak hemolysis and weak myonecrosis. The chain is Cytolysin Oshem 2 from Olindias sambaquiensis (Hydromedusa).